The chain runs to 82 residues: Probable tautomerase XF_1725 (82 aa).

Pro2 functions as the Proton acceptor; via imino nitrogen in the catalytic mechanism.

It belongs to the 4-oxalocrotonate tautomerase family.

In Xylella fastidiosa (strain 9a5c), this protein is Probable tautomerase XF_1725.